Reading from the N-terminus, the 591-residue chain is Probable lysosomal cobalamin transporter (591 aa).

The next 5 helical transmembrane spans lie at 8 to 28, 39 to 59, 95 to 115, 144 to 164, and 198 to 218; these read LIWVAYAVAVAILFLIASTFV, AAVTIVCIFTTLALLATVLLI, IVYYTLYSLDAVLCLLVIPFT, WTLGFLIFVVAIFLVGFFVPF, and FLITVGTVLFVLYTGAGMALL. Residues 238–266 are disordered; that stretch reads TASQLETNRERQRQLEGRNEGREGGLDSR. A compositionally biased stretch (basic and acidic residues) spans 244-266; that stretch reads TNRERQRQLEGRNEGREGGLDSR. The next 4 membrane-spanning stretches (helical) occupy residues 315–335, 378–398, 422–442, and 509–529; these read LIGGLILLVFALVIFASMLIT, VLFLLLVLFLFSASVVGIATA, MATVLLTLITLAINYSVAMVV, and FFGIVLFWAQFAFLGVYLIVF.

The protein belongs to the LIMR family. LMBRD1 subfamily.

The protein localises to the lysosome membrane. Probable lysosomal cobalamin transporter. Required to export cobalamin from lysosomes allowing its conversion to cofactors. This chain is Probable lysosomal cobalamin transporter, found in Pyrenophora tritici-repentis (strain Pt-1C-BFP) (Wheat tan spot fungus).